The sequence spans 308 residues: Ribosomal RNA small subunit methyltransferase H (308 aa).

Residues 36 to 38, D55, F86, D103, and Q110 each bind S-adenosyl-L-methionine; that span reads GGH.

The protein belongs to the methyltransferase superfamily. RsmH family.

It localises to the cytoplasm. The catalysed reaction is cytidine(1402) in 16S rRNA + S-adenosyl-L-methionine = N(4)-methylcytidine(1402) in 16S rRNA + S-adenosyl-L-homocysteine + H(+). Its function is as follows. Specifically methylates the N4 position of cytidine in position 1402 (C1402) of 16S rRNA. The sequence is that of Ribosomal RNA small subunit methyltransferase H from Helicobacter pylori (strain G27).